Consider the following 338-residue polypeptide: Cap-specific mRNA (nucleoside-2'-O-)-methyltransferase (338 aa).

Residue Tyr-22 coordinates mRNA. Positions 39, 66, 68, 72, 95, 97, 116, and 138 each coordinate S-adenosyl-L-methionine. The tract at residues 169–249 (PAASSLKWRC…NKIIRNRIII (81 aa)) is binding to NPH-I. A binding to Rap94 region spans residues 169-333 (PAASSLKWRC…NTKKSVRGNK (165 aa)). Catalysis depends on Lys-175, which acts as the For methyltransferase activity. MRNA-binding positions include 177-180 (RCPF), Asp-182, 205-207 (SAE), and Glu-233. Positions 305-338 (HHEPTQRKVPSKNTMLKSRNTKKSVRGNKQGRRT) are disordered. Over residues 323-338 (RNTKKSVRGNKQGRRT) the composition is skewed to basic residues.

The protein belongs to the class I-like SAM-binding methyltransferase superfamily. Poxvirus/kinetoplastid 2'-O-MTase family. Interacts with poly(A) polymerase catalytic subunit OPG063. Interacts with OPG109 and OPG123; these interactions might help linking transcription to capping and polyadenylation.

The protein resides in the virion. It carries out the reaction a 5'-end (N(7)-methyl 5'-triphosphoguanosine)-ribonucleoside in mRNA + S-adenosyl-L-methionine = a 5'-end (N(7)-methyl 5'-triphosphoguanosine)-(2'-O-methyl-ribonucleoside) in mRNA + S-adenosyl-L-homocysteine + H(+). Its function is as follows. Displays methyltransferase, positive regulation of the poly(A) polymerase and transcription elongation activities. Involved in the modification of both mRNA ends and in intermediate and late gene positive transcription elongation. At the mRNAs 5' end, methylates the ribose 2' OH group of the first transcribed nucleotide, thereby producing a 2'-O-methylpurine cap. At the 3' end, functions as a processivity factor which stimulates the activity of the viral poly(A) polymerase OPG063 that creates mRNA's poly(A) tail. In the presence of OPG102, OPG063 does not dissociate from the RNA allowing tail elongation to around 250 adenylates. This chain is Cap-specific mRNA (nucleoside-2'-O-)-methyltransferase (OPG102), found in Oryctolagus cuniculus (Rabbit).